The following is a 287-amino-acid chain: Inorganic pyrophosphatase (287 aa).

Residue Arg79 coordinates diphosphate. Positions 116, 121, and 153 each coordinate Mg(2+).

This sequence belongs to the PPase family. Requires Mg(2+) as cofactor.

It is found in the cytoplasm. The enzyme catalyses diphosphate + H2O = 2 phosphate + H(+). The polypeptide is Inorganic pyrophosphatase (IPP1) (Debaryomyces hansenii (strain ATCC 36239 / CBS 767 / BCRC 21394 / JCM 1990 / NBRC 0083 / IGC 2968) (Yeast)).